The primary structure comprises 121 residues: Two-component response regulator ORR13 (121 aa).

The 117-residue stretch at 5 to 121 (HVLVVDDTHV…ADVPRILNYI (117 aa)) folds into the Response regulatory domain. Aspartate 55 is subject to 4-aspartylphosphate.

This sequence belongs to the ARR family. Type-A subfamily. In terms of processing, two-component system major event consists of a His-to-Asp phosphorelay between a sensor histidine kinase (HK) and a response regulator (RR). In plants, the His-to-Asp phosphorelay involves an additional intermediate named Histidine-containing phosphotransfer protein (HPt). This multistep phosphorelay consists of a His-Asp-His-Asp sequential transfer of a phosphate group between first a His and an Asp of the HK protein, followed by the transfer to a conserved His of the HPt protein and finally the transfer to an Asp in the receiver domain of the RR protein. In terms of tissue distribution, expressed in flowers and panicles.

Functions as a response regulator involved in His-to-Asp phosphorelay signal transduction system. Phosphorylation of the Asp residue in the receiver domain activates the ability of the protein to promote the transcription of target genes. Type-A response regulators seem to act as negative regulators of the cytokinin signaling. The protein is Two-component response regulator ORR13 of Oryza sativa subsp. japonica (Rice).